The chain runs to 249 residues: MGTPRIQHLLILLVLGASLLTSGLELYCQKGLSMTVEADPANMFNWTTEEVETCDKGALCQETILIIKAGTETAILATKGCIPEGEEAITIVQHSSPPGLIVTSYSNYCEDSFCNDKDSLSQFWEFSETTASTVSTTLHCPTCVALGTCFSAPSLPCPNGTTRCYQGKLEITGGGIESSVEVKGCTAMIGCRLMSGILAVGPMFVREACPHQLLTQPRKTENGATCLPIPVWGLQLLLPLLLPSFIHFS.

An N-terminal signal peptide occupies residues M1 to E25. 2 N-linked (GlcNAc...) asparagine glycosylation sites follow: N45 and N159. In terms of domain architecture, UPAR/Ly6 spans C140–H211. Residue N222 is the site of GPI-anchor amidated asparagine attachment. The propeptide at G223 to S249 is removed in mature form.

As to quaternary structure, interacts with VAMP3. Interacts with LY6K. Interacts with DPEP3; co-localized on the cell surface of spermatocytes, spermatids, and testicular spermatozoa, co-localized only in cytoplasmic droplets of caput and corpus epididymal sperm. Interacts with ADAM5. N-glycosylated; by high mannose and/or biantennary complex and/or certain types of hybrid oligosaccharides; possesses different oligosaccharides chains according to its subcellular localization in the testis. Post-translationally, sheds from membrane raft by ACE and released from the cell surface of epididymal sperm while it passes through the caput epididymis leading to disappearance of TEX101 on spermatozoa; is essential to produce fertile spermatozoa. Detected in testis and spermatogonia. Not detected in spermatocytes. Detected in blood leukocytes.

Its subcellular location is the cell membrane. The protein resides in the membrane raft. It is found in the cytoplasmic vesicle. It localises to the secretory vesicle. The protein localises to the acrosome. Its subcellular location is the secreted. In terms of biological role, plays a role in fertilization by controlling binding of sperm to zona pellucida and migration of spermatozoa into the oviduct. May play a role in signal transduction and promote protein tyrosine phosphorylation. This Homo sapiens (Human) protein is Testis-expressed protein 101.